The primary structure comprises 156 residues: Transcription elongation factor GreA 1 (156 aa).

A coiled-coil region spans residues Arg-43 to Gln-74.

This sequence belongs to the GreA/GreB family.

Functionally, necessary for efficient RNA polymerase transcription elongation past template-encoded arresting sites. The arresting sites in DNA have the property of trapping a certain fraction of elongating RNA polymerases that pass through, resulting in locked ternary complexes. Cleavage of the nascent transcript by cleavage factors such as GreA or GreB allows the resumption of elongation from the new 3'terminus. GreA releases sequences of 2 to 3 nucleotides. The sequence is that of Transcription elongation factor GreA 1 from Lactiplantibacillus plantarum (strain ATCC BAA-793 / NCIMB 8826 / WCFS1) (Lactobacillus plantarum).